Reading from the N-terminus, the 431-residue chain is MRQLSTQDADFDSQLTELLAFETVNDATLLTTVDDIIARVRHGGDSVVLELTQQFDQHPATTTQALELSKEALAEAFANLDDVVKSALITAATRVKTFHERQVQETWQYEDELGNRLGQKVTALDRVGIYVPGGLASYPSSVLMNAIPAKVAGVKEVIMVVPAPKGVLNPLVLAAAHLAKVDRVFTIGGAQAVAALAYGTETIPAVDKITGPGNKYVAAAKRAVFGQVGIDMIAGPSEVLVYAEGEAQDRADWLAMDLLSQAEHDRIAQAIFVTTSAQQLKEVAIEIEKALAELPKADIARDSLKNRGVLILVRDREEGMAVINRVAPEHLELSVDHPDALLNSIRHAGAIFMGRHTPEAIGDYCAGPNHVLPTSGTARFSSPLGVYDFQKKSSIIYCSESGSKPLAQTADILAQHEDLEAHARSARYRYQ.

Positions 130, 191, and 214 each coordinate NAD(+). Substrate is bound by residues serine 237, glutamine 261, and histidine 264. 2 residues coordinate Zn(2+): glutamine 261 and histidine 264. Catalysis depends on proton acceptor residues glutamate 329 and histidine 330. The substrate site is built by histidine 330, aspartate 363, glutamate 417, and histidine 422. Residue aspartate 363 participates in Zn(2+) binding. Residue histidine 422 coordinates Zn(2+).

Belongs to the histidinol dehydrogenase family. The cofactor is Zn(2+).

It catalyses the reaction L-histidinol + 2 NAD(+) + H2O = L-histidine + 2 NADH + 3 H(+). Its pathway is amino-acid biosynthesis; L-histidine biosynthesis; L-histidine from 5-phospho-alpha-D-ribose 1-diphosphate: step 9/9. Functionally, catalyzes the sequential NAD-dependent oxidations of L-histidinol to L-histidinaldehyde and then to L-histidine. The sequence is that of Histidinol dehydrogenase from Psychrobacter arcticus (strain DSM 17307 / VKM B-2377 / 273-4).